A 131-amino-acid chain; its full sequence is Large-conductance mechanosensitive channel (131 aa).

The next 2 membrane-spanning stretches (helical) occupy residues 21–41 (VGVI…ADVI) and 76–96 (GMFI…FLMI).

The protein belongs to the MscL family. Homopentamer.

The protein localises to the cell inner membrane. Channel that opens in response to stretch forces in the membrane lipid bilayer. May participate in the regulation of osmotic pressure changes within the cell. This Histophilus somni (strain 129Pt) (Haemophilus somnus) protein is Large-conductance mechanosensitive channel.